The chain runs to 995 residues: Serine-aspartate repeat-containing protein C (995 aa).

Residues 1–50 form the signal peptide; the sequence is MNNKKTATNRKGMIPNRLNKFSIRKYSVGTASILVGTTLIFGLSGHEAKA. Positions 21–32 match the YSIRK-G/S signaling motif motif; that stretch reads FSIRKYSVGTAS. A disordered region spans residues 51–164; it reads AEHTNGELNQ…STTPKTTTIK (114 aa). Residues 51-495 form a ligand binding A region region; the sequence is AEHTNGELNQ…GSSTANGDQK (445 aa). Residues 56–71 show a composition bias toward polar residues; it reads GELNQSKNETTAPSEN. Over residues 72 to 83 the composition is skewed to basic and acidic residues; the sequence is KTTKKVDSRQLK. Residues 84–155 are compositionally biased toward polar residues; it reads DNTQTATADQ…SNLTQAKDVS (72 aa). 2 CNA-B domains span residues 496-606 and 607-717; these read KYNL…YKTP and KYSL…EEET. Residues 678–975 are disordered; that stretch reads TQTGTNTTED…NNSNNGTLFG (298 aa). 2 stretches are compositionally biased toward acidic residues: residues 685-695 and 712-934; these read TEDDKDADGGE and YYEE…DSDS. The short motif at 958–962 is the LPXTG sorting signal element; the sequence is LPETG. A compositionally biased stretch (low complexity) spans 960-975; it reads ETGSENNNSNNGTLFG. Thr961 carries the pentaglycyl murein peptidoglycan amidated threonine modification. Positions 962 to 995 are cleaved as a propeptide — removed by sortase; the sequence is GSENNNSNNGTLFGGLFAALGSLLLFGRRKKQNK.

This sequence belongs to the serine-aspartate repeat-containing protein (SDr) family. As to quaternary structure, homodimerizes; via N2-Domain. Interacts with host NRXN1; this interaction mediates bacterial attachment to host cells.

The protein localises to the secreted. It is found in the cell wall. Cell surface-associated calcium-binding protein which plays an important role in adhesion and pathogenesis. Mediates interactions with components of the extracellular matrix such as host NRXN1 to promote bacterial adhesion. In Staphylococcus aureus (strain NCTC 8325 / PS 47), this protein is Serine-aspartate repeat-containing protein C (sdrC).